The primary structure comprises 324 residues: Heat-inducible transcription repressor HrcA (324 aa).

It belongs to the HrcA family.

Negative regulator of class I heat shock genes (grpE-dnaK-dnaJ and groELS operons). Prevents heat-shock induction of these operons. This chain is Heat-inducible transcription repressor HrcA, found in Synechococcus sp. (strain CC9902).